We begin with the raw amino-acid sequence, 468 residues long: Cysteine--tRNA ligase (468 aa).

Cys-33 serves as a coordination point for Zn(2+). The 'HIGH' region motif lies at 35–45; that stretch reads ATVQGLPHIGH. Zn(2+) contacts are provided by Cys-211, His-236, and Glu-240. The 'KMSKS' region motif lies at 267-271; that stretch reads KMSKS. Residue Lys-270 coordinates ATP.

This sequence belongs to the class-I aminoacyl-tRNA synthetase family. In terms of assembly, monomer. It depends on Zn(2+) as a cofactor.

Its subcellular location is the cytoplasm. It carries out the reaction tRNA(Cys) + L-cysteine + ATP = L-cysteinyl-tRNA(Cys) + AMP + diphosphate. The protein is Cysteine--tRNA ligase of Mycobacterium avium (strain 104).